The primary structure comprises 144 residues: Large ribosomal subunit protein uL11 (144 aa).

Belongs to the universal ribosomal protein uL11 family. As to quaternary structure, part of the ribosomal stalk of the 50S ribosomal subunit. Interacts with L10 and the large rRNA to form the base of the stalk. L10 forms an elongated spine to which L12 dimers bind in a sequential fashion forming a multimeric L10(L12)X complex. Post-translationally, one or more lysine residues are methylated.

Functionally, forms part of the ribosomal stalk which helps the ribosome interact with GTP-bound translation factors. The polypeptide is Large ribosomal subunit protein uL11 (Deinococcus deserti (strain DSM 17065 / CIP 109153 / LMG 22923 / VCD115)).